The sequence spans 230 residues: Cutinase 1 (230 aa).

An N-terminal signal peptide occupies residues 1-16; that stretch reads MKFFALTTLLAATASA. Residues 17 to 31 constitute a propeptide that is removed on maturation; that stretch reads LPTSNPAQELEARQL. An N-D-glucuronoyl glycine modification is found at glycine 32. A disulfide bridge links cysteine 47 with cysteine 125. Residue serine 136 is the Nucleophile of the active site. An intrachain disulfide couples cysteine 187 to cysteine 194. The active site involves aspartate 191. The Proton donor/acceptor role is filled by histidine 204.

This sequence belongs to the cutinase family. Post-translationally, the 2 disulfide bonds play a critical role in holding the catalytic residues in juxta-position; reduction of the disulfide bridges results in the complete inactivation of the enzyme. In terms of processing, O-glycosylated; contains one mole each of mannose, arabinose, N-acetylglucosamine, and glucuronic acid.

It localises to the secreted. The enzyme catalyses cutin + H2O = cutin monomers.. Its activity is regulated as follows. Inhibited by n-undecyl phosphonate (C11Y4). Inhibited by paraoxon. Functionally, catalyzes the hydrolysis of complex carboxylic polyesters found in the cell wall of plants. Degrades cutin, a macromolecule that forms the structure of the plant cuticle. Allows pathogenic fungi to penetrate through the cuticular barrier into the host plant during the initial stage of fungal infection. This is Cutinase 1 (CUT1) from Fusarium vanettenii (Neocosmospora pisi).